The chain runs to 882 residues: DNA polymerase 1 (882 aa).

The interval 1–31 (MTKQLTLFDIPSSKPAKSEQNTQQSQQSAPV) is disordered. Residues 18–29 (SEQNTQQSQQSA) are compositionally biased toward polar residues.

It belongs to the DNA polymerase type-B family. Interacts with PCNA subunit PCNA2 and weakly with PCNA3.

The catalysed reaction is DNA(n) + a 2'-deoxyribonucleoside 5'-triphosphate = DNA(n+1) + diphosphate. Its activity is regulated as follows. DNA synthesis is stimulated by PCNA heterotrimers. Its function is as follows. This polymerase possesses two enzymatic activities: DNA synthesis (polymerase) and an exonucleolytic activity that degrades single-stranded DNA in the 3'- to 5'-direction. DNA polymerase I, DNA ligase and the flap endonuclease may be constitutively associated with the PCNA heterotrimer forming a scanning complex able to couple DNA synthesis and Okazaki fragment maturation. This is DNA polymerase 1 (dpo1) from Saccharolobus solfataricus (strain ATCC 35092 / DSM 1617 / JCM 11322 / P2) (Sulfolobus solfataricus).